The sequence spans 332 residues: MITQIGSTSSERRCAICSKLGNSYNYGVLSCNACKMFFRRATLGKSEKFCINNDNCDTSNLILTCRQCRYNKCLKMGMRIVTNQYDSLDDIIKVLAKWNLDRSNKLMNFQCFEDPTLDQVIQKHPVFTKKPSNLSFSKSEWGFMEQLTTVEFMSKFEFTRHLFSEDFRIVLKSSCFKIASFIKAVRSYSMKKEDIRYPDGELIVPMELVPFCTSEFLARVQCRLIGRIIELKLKEEEFLLLIAIFVCDPTANNLTARGREILSFHQNVYNDALLQLCLRNEGSCGPARFNDLLSVCHVVNKHVEDIGQLCFMFSFHPPTTKYKRLCAELLGA.

The nuclear receptor DNA-binding region spans 11–85 (ERRCAICSKL…MGMRIVTNQY (75 aa)). NR C4-type zinc fingers lie at residues 14 to 34 (CAIC…CNAC) and 50 to 73 (CINN…YNKC). In terms of domain architecture, NR LBD spans 101–332 (DRSNKLMNFQ…KRLCAELLGA (232 aa)).

This sequence belongs to the nuclear hormone receptor family.

Its subcellular location is the nucleus. Functionally, orphan nuclear receptor. This Caenorhabditis elegans protein is Nuclear hormone receptor family member nhr-9 (nhr-9).